We begin with the raw amino-acid sequence, 688 residues long: Two-component response regulator ORR23 (688 aa).

The Response regulatory domain occupies 25-140 (RVLAVDDDPV…ELRNIWQHVI (116 aa)). Asp76 bears the 4-aspartylphosphate mark. Residues 161-212 (PPNADSDHVHGHVTCGSPDQSGRPSKKRKEYCSEEEDEGEVNTQDIDDPSAP) form a disordered region. The span at 193-208 (SEEEDEGEVNTQDIDD) shows a compositional bias: acidic residues. The segment at residues 211–270 (APKKPRVVWSVELHRKFVAAVNQLGIDKAVPKRILELMNVEKLTRENVASHLQKYRLYLK) is a DNA-binding region (myb-like GARP).

The protein belongs to the ARR family. Type-B subfamily. In terms of processing, two-component system major event consists of a His-to-Asp phosphorelay between a sensor histidine kinase (HK) and a response regulator (RR). In plants, the His-to-Asp phosphorelay involves an additional intermediate named Histidine-containing phosphotransfer protein (HPt). This multistep phosphorelay consists of a His-Asp-His-Asp sequential transfer of a phosphate group between first a His and an Asp of the HK protein, followed by the transfer to a conserved His of the HPt protein and finally the transfer to an Asp in the receiver domain of the RR protein.

The protein localises to the nucleus. Its function is as follows. Transcriptional activator that binds specific DNA sequence. Functions as a response regulator involved in His-to-Asp phosphorelay signal transduction system. Phosphorylation of the Asp residue in the receiver domain activates the ability of the protein to promote the transcription of target genes. May directly activate some type-A response regulators in response to cytokinins. The sequence is that of Two-component response regulator ORR23 from Oryza sativa subsp. indica (Rice).